A 283-amino-acid polypeptide reads, in one-letter code: Elongation factor Ts (283 aa).

Positions 84–87 are involved in Mg(2+) ion dislocation from EF-Tu; the sequence is TDFV.

This sequence belongs to the EF-Ts family.

Its subcellular location is the cytoplasm. Functionally, associates with the EF-Tu.GDP complex and induces the exchange of GDP to GTP. It remains bound to the aminoacyl-tRNA.EF-Tu.GTP complex up to the GTP hydrolysis stage on the ribosome. This is Elongation factor Ts from Bifidobacterium longum subsp. infantis (strain ATCC 15697 / DSM 20088 / JCM 1222 / NCTC 11817 / S12).